Consider the following 143-residue polypeptide: Large ribosomal subunit protein uL15 (143 aa).

The interval 1 to 54 (MELNSIKPADGAKHAARRVGRGIGSGLGKTAGRGHKGQKSRSGGYHKVGFEGGQ) is disordered. Residues 21 to 31 (RGIGSGLGKTA) are compositionally biased toward gly residues.

The protein belongs to the universal ribosomal protein uL15 family. As to quaternary structure, part of the 50S ribosomal subunit.

Binds to the 23S rRNA. This chain is Large ribosomal subunit protein uL15, found in Acidovorax ebreus (strain TPSY) (Diaphorobacter sp. (strain TPSY)).